A 70-amino-acid chain; its full sequence is Consomatin Mrc3 (70 aa).

An N-terminal signal peptide occupies residues 1-22 (MQTAYWVMVMMMVWITAPLSEG). Residues 23–55 (GKLNDVIRGLVPDDVTPKRILQSLISRRRFDGR) constitute a propeptide that is removed on maturation. Residues C62 and C67 are joined by a disulfide bond. The residue at position 64 (W64) is a D-tryptophan. Position 68 is a 4-hydroxyproline (P68). Tyrosine amide is present on Y69.

The protein belongs to the conotoxin C superfamily. Consomatin family. In terms of tissue distribution, expressed by the venom duct.

It is found in the secreted. Moderately activates human somatostatin receptors (SSTR) with a preferential activation of SSTR1 and SSTR4. In vivo, does not cause behavioral changes in mice within a few minutes of intracranial injection, but causes a progressive loss of movement thereafter. Four to five hours after injection, mice recover, even with the highest dose tested. Shows antinociception and antihyperalgesia activities in two mouse models of acute pain, most probably by acting outside the central nervous system. The sequence is that of Consomatin Mrc3 from Conus mercator (Trader cone).